A 226-amino-acid chain; its full sequence is Protein-L-isoaspartate O-methyltransferase (226 aa).

The active site involves Ser-66.

The protein belongs to the methyltransferase superfamily. L-isoaspartyl/D-aspartyl protein methyltransferase family.

Its subcellular location is the cytoplasm. The enzyme catalyses [protein]-L-isoaspartate + S-adenosyl-L-methionine = [protein]-L-isoaspartate alpha-methyl ester + S-adenosyl-L-homocysteine. Functionally, catalyzes the methyl esterification of L-isoaspartyl residues in peptides and proteins that result from spontaneous decomposition of normal L-aspartyl and L-asparaginyl residues. It plays a role in the repair and/or degradation of damaged proteins. The sequence is that of Protein-L-isoaspartate O-methyltransferase from Methanopyrus kandleri (strain AV19 / DSM 6324 / JCM 9639 / NBRC 100938).